The following is a 1715-amino-acid chain: Ubiquitin carboxyl-terminal hydrolase 32 (1715 aa).

EF-hand domains are found at residues 161-196 (IPKN…ACRG) and 197-232 (PGVE…LLLV). The Ca(2+) site is built by Asp-174, Asn-176, Asp-178, His-180, Glu-185, Asp-210, Asp-212, Asp-214, and Glu-221. A DUSP domain is found at 314–492 (QCKHMENDIV…DNLPLPRQVI (179 aa)). The interval 393–429 (QHDSYSLGSGTGSASGSGSASSGISAGRHCGPVRPGP) is disordered. Low complexity predominate over residues 408–419 (GSGSASSGISAG). The USP domain maps to 677 to 1675 (TGLHNLGNTC…AAYLLFYERK (999 aa)). The Nucleophile role is filled by Cys-686. Composition is skewed to polar residues over residues 1103-1126 (TESN…SSLT) and 1150-1164 (YRTS…STGH). Disordered regions lie at residues 1103–1213 (TESN…PHKA) and 1536–1569 (DEID…GNIL). Residues 1171-1180 (DVDEQAEEGN) show a composition bias toward acidic residues. Residues 1188–1209 (DQITTSQPETSSGVYSRRSSQP) are compositionally biased toward polar residues. Basic and acidic residues predominate over residues 1540 to 1549 (APSKEVKEEL). Positions 1550 to 1559 (PNQTGSTKAT) are enriched in polar residues. The active-site Proton acceptor is the His-1633.

It belongs to the peptidase C19 family. USP20/USP33 subfamily.

It carries out the reaction Thiol-dependent hydrolysis of ester, thioester, amide, peptide and isopeptide bonds formed by the C-terminal Gly of ubiquitin (a 76-residue protein attached to proteins as an intracellular targeting signal).. Its function is as follows. Deubiquitinating enzyme that acts as an inhibitor of mitophagy probably by counteracting the action of park. Possibly functions by hydrolyzing ubiquitin attached by park on target proteins, thereby reducing park's ability to drive mitophagy. The polypeptide is Ubiquitin carboxyl-terminal hydrolase 32 (Drosophila melanogaster (Fruit fly)).